Here is a 283-residue protein sequence, read N- to C-terminus: N-terminal Xaa-Pro-Lys N-methyltransferase 2 (283 aa).

S-adenosyl-L-methionine is bound by residues G124, R129, D146, 174-175 (LQ), and Q190.

The protein belongs to the methyltransferase superfamily. NTM1 family.

It is found in the nucleus. The enzyme catalyses N-terminal L-alanyl-L-prolyl-L-lysyl-[protein] + S-adenosyl-L-methionine = N-terminal N-methyl-L-alanyl-L-prolyl-L-lysyl-[protein] + S-adenosyl-L-homocysteine + H(+). It catalyses the reaction N-terminal L-prolyl-L-prolyl-L-lysyl-[protein] + S-adenosyl-L-methionine = N-terminal N-methyl-L-prolyl-L-prolyl-L-lysyl-[protein] + S-adenosyl-L-homocysteine + H(+). It carries out the reaction N-terminal L-seryl-L-prolyl-L-lysyl-[protein] + S-adenosyl-L-methionine = N-terminal N-methyl-L-seryl-L-prolyl-L-lysyl-[protein] + S-adenosyl-L-homocysteine + H(+). Alpha N-methyltransferase that methylates the N-terminus of target proteins containing the N-terminal motif [Ala/Pro/Ser]-Pro-Lys when the initiator Met is cleaved. Specifically catalyzes monomethylation of exposed alpha-amino group of Ala or Ser residue in the [Ala/Ser]-Pro-Lys motif and Pro in the Pro-Pro-Lys motif. Predominantly functions as a mono-methyltransferase but is also able to di-/tri-methylate the GPKRIA peptide and di-methylate the PPKRIA peptide (in vitro). May activate NTMT1 by priming its substrates for trimethylation. This Mus musculus (Mouse) protein is N-terminal Xaa-Pro-Lys N-methyltransferase 2 (Ntmt2).